A 121-amino-acid polypeptide reads, in one-letter code: Large ribosomal subunit protein bL17 (121 aa).

The protein belongs to the bacterial ribosomal protein bL17 family. In terms of assembly, part of the 50S ribosomal subunit. Contacts protein L32.

The protein is Large ribosomal subunit protein bL17 of Sulfurihydrogenibium sp. (strain YO3AOP1).